Reading from the N-terminus, the 270-residue chain is Tryptophan synthase alpha chain (270 aa).

Catalysis depends on proton acceptor residues Glu49 and Asp60.

The protein belongs to the TrpA family. Tetramer of two alpha and two beta chains.

It catalyses the reaction (1S,2R)-1-C-(indol-3-yl)glycerol 3-phosphate + L-serine = D-glyceraldehyde 3-phosphate + L-tryptophan + H2O. Its pathway is amino-acid biosynthesis; L-tryptophan biosynthesis; L-tryptophan from chorismate: step 5/5. Functionally, the alpha subunit is responsible for the aldol cleavage of indoleglycerol phosphate to indole and glyceraldehyde 3-phosphate. The polypeptide is Tryptophan synthase alpha chain (Pseudomonas savastanoi pv. phaseolicola (strain 1448A / Race 6) (Pseudomonas syringae pv. phaseolicola (strain 1448A / Race 6))).